Reading from the N-terminus, the 272-residue chain is Tryptophan synthase alpha chain (272 aa).

Residues glutamate 53 and aspartate 64 each act as proton acceptor in the active site.

The protein belongs to the TrpA family. Tetramer of two alpha and two beta chains.

The enzyme catalyses (1S,2R)-1-C-(indol-3-yl)glycerol 3-phosphate + L-serine = D-glyceraldehyde 3-phosphate + L-tryptophan + H2O. Its pathway is amino-acid biosynthesis; L-tryptophan biosynthesis; L-tryptophan from chorismate: step 5/5. Its function is as follows. The alpha subunit is responsible for the aldol cleavage of indoleglycerol phosphate to indole and glyceraldehyde 3-phosphate. The sequence is that of Tryptophan synthase alpha chain from Xanthomonas campestris pv. campestris (strain B100).